The chain runs to 241 residues: MRIPLLAPDNYAFPDPAYALARCDGLVGVSRDLDAGRLLEAYRNGVFPWFLRDGWFFWYAVGPRAVIVPERLHVPRSLEKTLRNCSYRVTVNGCFAEVVAHCAAAVRPNQDGTWIAPEFQTAYLKLHEMGYAHSFECHYPDENGKTRLAGGFYGVQIGRVFYGESMFALQPDASKIAFACAVPFLASLGVELIDCQQDTGHMRRFGSELLPFADFAERLRMLNAVPLKEEIGRREVACKGL.

The protein belongs to the L/F-transferase family.

The protein resides in the cytoplasm. It carries out the reaction N-terminal L-lysyl-[protein] + L-leucyl-tRNA(Leu) = N-terminal L-leucyl-L-lysyl-[protein] + tRNA(Leu) + H(+). It catalyses the reaction N-terminal L-arginyl-[protein] + L-leucyl-tRNA(Leu) = N-terminal L-leucyl-L-arginyl-[protein] + tRNA(Leu) + H(+). The enzyme catalyses L-phenylalanyl-tRNA(Phe) + an N-terminal L-alpha-aminoacyl-[protein] = an N-terminal L-phenylalanyl-L-alpha-aminoacyl-[protein] + tRNA(Phe). Functionally, functions in the N-end rule pathway of protein degradation where it conjugates Leu, Phe and, less efficiently, Met from aminoacyl-tRNAs to the N-termini of proteins containing an N-terminal arginine or lysine. This chain is Leucyl/phenylalanyl-tRNA--protein transferase, found in Neisseria meningitidis serogroup C / serotype 2a (strain ATCC 700532 / DSM 15464 / FAM18).